Here is a 343-residue protein sequence, read N- to C-terminus: Dihydroorotate dehydrogenase (quinone) (343 aa).

Residues 61-65 and Thr-85 contribute to the FMN site; that span reads AGLDK. Lys-65 lines the substrate pocket. A substrate-binding site is contributed by 110–114; it reads NRMGF. Residues Asn-138 and Asn-171 each coordinate FMN. Substrate is bound at residue Asn-171. Residue Ser-174 is the Nucleophile of the active site. Asn-176 contacts substrate. Residues Lys-216 and Thr-244 each contribute to the FMN site. 245–246 provides a ligand contact to substrate; the sequence is NT. FMN is bound by residues Gly-267, Gly-296, and 317–318; that span reads YS.

It belongs to the dihydroorotate dehydrogenase family. Type 2 subfamily. In terms of assembly, monomer. It depends on FMN as a cofactor.

The protein localises to the cell membrane. The catalysed reaction is (S)-dihydroorotate + a quinone = orotate + a quinol. The protein operates within pyrimidine metabolism; UMP biosynthesis via de novo pathway; orotate from (S)-dihydroorotate (quinone route): step 1/1. Its function is as follows. Catalyzes the conversion of dihydroorotate to orotate with quinone as electron acceptor. The protein is Dihydroorotate dehydrogenase (quinone) of Pseudomonas syringae pv. tomato (strain ATCC BAA-871 / DC3000).